The chain runs to 540 residues: Probable metabolite transport protein YFL040W (540 aa).

Residues 1 to 29 (MTAMKAIVWRLPKMPKIKITKTYEVTKIT) lie on the Cytoplasmic side of the membrane. Residues 30 to 50 (AILTLVGFIMGLEVPSLATFL) form a helical membrane-spanning segment. Topologically, residues 51-67 (TNKTFNEYFKYPTPLQQ) are extracellular. An N-linked (GlcNAc...) asparagine glycan is attached at Asn-52. A helical membrane pass occupies residues 68–88 (GLLMGSTPLGGIMGCFICCIM). Residues 89–101 (NDRFSRIYQFQSG) lie on the Cytoplasmic side of the membrane. A helical membrane pass occupies residues 102 to 122 (IIIWNIVTLLNFCIWDILGLL). Over 123–126 (ICRM) the chain is Extracellular. The helical transmembrane segment at 127 to 147 (IKGMILGNFSILVASYANEVI) threads the bilayer. The Cytoplasmic segment spans residues 148–158 (PRGKRGSTMSY). The chain crosses the membrane as a helical span at residues 159-179 (IQLCLTIGILVMHYLCIALSL). Residues 180–187 (WDSHFAFR) lie on the Extracellular side of the membrane. Residues 188–208 (IAWCIGIIPGLLFWMASYALP) traverse the membrane as a helical segment. Residues 209–275 (ESYHWLVLHG…KKLPRGSFKP (67 aa)) lie on the Cytoplasmic side of the membrane. The helical transmembrane segment at 276 to 296 (LILGMTLQLLVQFSGINIILG) threads the bilayer. The Extracellular segment spans residues 297–313 (YITYICEIVGLEGNVKL). The chain crosses the membrane as a helical span at residues 314 to 334 (FTSSIPYFINMVLSLLPITFI). At 335–341 (DYTSRKL) the chain is on the cytoplasmic side. A helical transmembrane segment spans residues 342–362 (ITLLGGFPISGLLITIGALFV). Residues 363 to 385 (KYGQDTKPIDGNRSLVWSIGENP) lie on the Extracellular side of the membrane. A glycan (N-linked (GlcNAc...) asparagine) is linked at Asn-374. A helical transmembrane segment spans residues 386–406 (FVGGWILTLCFLIVGIFAMSL). The Cytoplasmic portion of the chain corresponds to 407-428 (SSIPWVYTNEMLPSRVKVKGFA). The chain crosses the membrane as a helical span at residues 429–449 (ICVTFGWLGNFILTFLCPVMI). The Extracellular portion of the chain corresponds to 450–455 (ERLKGT). The helical transmembrane segment at 456 to 476 (TFIIFGSLTFLISLSVLIWFP) threads the bilayer. Topologically, residues 477–540 (ETKGMSIEDI…KLKSDEEMII (64 aa)) are cytoplasmic. Residues 499–540 (NLHGEKGIKTPDSNSNGGSTRSSQEGQLHKPIKLKSDEEMII) form a disordered region. Positions 509–524 (PDSNSNGGSTRSSQEG) are enriched in polar residues.

This sequence belongs to the major facilitator superfamily. Sugar transporter (TC 2.A.1.1) family.

It localises to the membrane. This Saccharomyces cerevisiae (strain ATCC 204508 / S288c) (Baker's yeast) protein is Probable metabolite transport protein YFL040W.